Reading from the N-terminus, the 384-residue chain is Conidiophore development protein hymA (384 aa).

The span at glutamate 362 to serine 374 shows a compositional bias: basic and acidic residues. The disordered stretch occupies residues glutamate 362–alanine 384.

It belongs to the Mo25 family.

The protein resides in the cytoplasm. Required for conidiophore development. The sequence is that of Conidiophore development protein hymA (hymA) from Emericella nidulans (strain FGSC A4 / ATCC 38163 / CBS 112.46 / NRRL 194 / M139) (Aspergillus nidulans).